We begin with the raw amino-acid sequence, 231 residues long: uncharacterized protein (231 aa).

10–34 provides a ligand contact to NADP(+); sequence VVTGAGSGIGEAIATLLHEEGAKVV. Serine 140 lines the substrate pocket. Tyrosine 153 functions as the Proton acceptor in the catalytic mechanism.

This sequence belongs to the short-chain dehydrogenases/reductases (SDR) family.

This is an uncharacterized protein from Staphylococcus aureus (strain N315).